The chain runs to 280 residues: Four and a half LIM domains protein 3 (280 aa).

Serine 2 bears the N-acetylserine mark. The C4-type zinc-finger motif lies at 7–31 (CAKCNESLYGRKYIQTDSGPYCVPC). 2 LIM zinc-binding domains span residues 40-92 (CAEC…CNDC) and 101-153 (CSAC…CVPC). Lysine 157 is modified (N6-acetyllysine). LIM zinc-binding domains are found at residues 162-212 (CARC…CVAC) and 221-275 (CSSC…CQGC). At lysine 235 the chain carries N6-acetyllysine.

Interacts with SOX15; the interaction recruits FHL3 to FOXK1 promoters where it acts as a transcriptional coactivator of FOXK1. Expressed only in skeletal muscle.

It is found in the nucleus. It localises to the cytoplasm. Functionally, recruited by SOX15 to FOXK1 promoters where it acts as a transcriptional coactivator of FOXK1. The polypeptide is Four and a half LIM domains protein 3 (FHL3) (Homo sapiens (Human)).